A 152-amino-acid polypeptide reads, in one-letter code: uncharacterized protein (152 aa).

5 helical membrane-spanning segments follow: residues 2-22 (GVVF…LKLM), 33-53 (LKMI…WLIM), 58-78 (FLIE…LIYL), 97-117 (FMGN…IEYV), and 122-142 (IASP…FFNC).

The protein localises to the cell membrane. This is an uncharacterized protein from Methanocaldococcus jannaschii (strain ATCC 43067 / DSM 2661 / JAL-1 / JCM 10045 / NBRC 100440) (Methanococcus jannaschii).